We begin with the raw amino-acid sequence, 181 residues long: GTP cyclohydrolase 1 2 (181 aa).

Belongs to the GTP cyclohydrolase I family. In terms of assembly, homomer.

It carries out the reaction GTP + H2O = 7,8-dihydroneopterin 3'-triphosphate + formate + H(+). It participates in cofactor biosynthesis; 7,8-dihydroneopterin triphosphate biosynthesis; 7,8-dihydroneopterin triphosphate from GTP: step 1/1. The protein is GTP cyclohydrolase 1 2 of Pseudomonas syringae pv. tomato (strain ATCC BAA-871 / DC3000).